A 462-amino-acid chain; its full sequence is tRNA pseudouridine(32) synthase, mitochondrial (462 aa).

Residues 1–24 (MQRNNRLRNLFTVPVIMARQLKRN) constitute a mitochondrion transit peptide. In terms of domain architecture, S4 RNA-binding spans 127–188 (KLVDVFISEF…HEPPVTSRPI (62 aa)). Asp-238 is a catalytic residue.

It belongs to the pseudouridine synthase RluA family.

Its subcellular location is the mitochondrion. It carries out the reaction uridine(32) in tRNA = pseudouridine(32) in tRNA. Responsible for synthesis of pseudouridine from uracil-32 in mitochondrial transfer RNAs. The sequence is that of tRNA pseudouridine(32) synthase, mitochondrial (PUS9) from Saccharomyces cerevisiae (strain ATCC 204508 / S288c) (Baker's yeast).